Consider the following 324-residue polypeptide: Glyceraldehyde-3-phosphate dehydrogenase 1 (324 aa).

Residues 13 to 14, Asp35, and Lys85 contribute to the NAD(+) site; that span reads RI. Residues 157–159, Thr188, 217–218, and Arg240 contribute to the D-glyceraldehyde 3-phosphate site; these read SCT and TG. Cys158 (nucleophile) is an active-site residue. NAD(+) is bound at residue Asn322.

Belongs to the glyceraldehyde-3-phosphate dehydrogenase family. In terms of assembly, homotetramer.

It is found in the cytoplasm. The enzyme catalyses D-glyceraldehyde 3-phosphate + phosphate + NAD(+) = (2R)-3-phospho-glyceroyl phosphate + NADH + H(+). The protein operates within carbohydrate degradation; glycolysis; pyruvate from D-glyceraldehyde 3-phosphate: step 1/5. This is Glyceraldehyde-3-phosphate dehydrogenase 1 (GPD-1) from Globodera rostochiensis (Golden nematode worm).